We begin with the raw amino-acid sequence, 164 residues long: Transcriptional repressor NrdR (164 aa).

Residues Cys-3–Cys-34 fold into a zinc finger. The ATP-cone domain maps to Leu-49–Glu-139.

This sequence belongs to the NrdR family. It depends on Zn(2+) as a cofactor.

Its function is as follows. Negatively regulates transcription of bacterial ribonucleotide reductase nrd genes and operons by binding to NrdR-boxes. The chain is Transcriptional repressor NrdR from Streptococcus equi subsp. zooepidemicus (strain H70).